A 552-amino-acid chain; its full sequence is Hydroxylamine reductase (552 aa).

The [2Fe-2S] cluster site is built by C5, C8, C20, and C27. Positions 251, 275, 319, 407, 435, 460, 494, and 496 each coordinate hybrid [4Fe-2O-2S] cluster. C407 bears the Cysteine persulfide mark.

It belongs to the HCP family. Requires [2Fe-2S] cluster as cofactor. It depends on hybrid [4Fe-2O-2S] cluster as a cofactor.

Its subcellular location is the cytoplasm. It catalyses the reaction A + NH4(+) + H2O = hydroxylamine + AH2 + H(+). Its function is as follows. Catalyzes the reduction of hydroxylamine to form NH(3) and H(2)O. The sequence is that of Hydroxylamine reductase from Shigella boydii serotype 4 (strain Sb227).